Here is a 237-residue protein sequence, read N- to C-terminus: Urease accessory protein UreF (237 aa).

The protein belongs to the UreF family. In terms of assembly, ureD, UreF and UreG form a complex that acts as a GTP-hydrolysis-dependent molecular chaperone, activating the urease apoprotein by helping to assemble the nickel containing metallocenter of UreC. The UreE protein probably delivers the nickel.

The protein localises to the cytoplasm. Required for maturation of urease via the functional incorporation of the urease nickel metallocenter. The sequence is that of Urease accessory protein UreF from Streptococcus thermophilus (strain ATCC BAA-250 / LMG 18311).